The following is a 174-amino-acid chain: Ribosome maturation factor RimM (174 aa).

The PRC barrel domain maps to 95–174 (DDEFYWRDLI…QIQVEWPSDF (80 aa)).

The protein belongs to the RimM family. Binds ribosomal protein uS19.

The protein localises to the cytoplasm. An accessory protein needed during the final step in the assembly of 30S ribosomal subunit, possibly for assembly of the head region. Essential for efficient processing of 16S rRNA. May be needed both before and after RbfA during the maturation of 16S rRNA. It has affinity for free ribosomal 30S subunits but not for 70S ribosomes. The sequence is that of Ribosome maturation factor RimM from Idiomarina loihiensis (strain ATCC BAA-735 / DSM 15497 / L2-TR).